The primary structure comprises 300 residues: Hairy/enhancer-of-split related with YRPW motif protein 1 (300 aa).

A disordered region spans residues 1–52 (MKRGHDYSSSDSELDENIEVEKESADENGNLSSAAGSMSPSTSSQILARKRR). The span at 32 to 44 (SSAAGSMSPSTSS) shows a compositional bias: low complexity. Residues 48–103 (ARKRRRGIIEKRRRDRINNSLSELRRLVPSAFEKQGSAKLEKAEILQMTVDHLKML) form the bHLH domain. In terms of domain architecture, Orange spans 121–157 (YRSLGFRECLAEVARYLSIIEGMDTTDPLRVRLVSHL). Residues 199-210 (AHTSANSTSSST) are compositionally biased toward low complexity. Disordered stretches follow at residues 199–232 (AHTS…LRVP) and 278–300 (LSPT…IGAF). The YRPW motif motif lies at 290–293 (YRPW).

It belongs to the HEY family. As to quaternary structure, efficient DNA binding requires dimerization with another bHLH protein. Binds DNA in the form of homodimer or more strongly as a heterodimer with hes1/hairy1 or hes4/hairy2b. Also weakly interacts with the bHLH proteins hes2, neurod1 and neurod4/ath3. Interacts (via Orange domain) with ccdc89/boip (via C-terminus).

It localises to the nucleus. Functionally, downstream effector of Notch signaling. Transcriptional repressor which binds preferentially to the canonical E box sequence 5'-CACGTG-3'. Acts as a suppressor of neurogenesis by antagonizing proneural gene function. Functions during floorplate development. Plays a role in pronephros formation in the inhibition of distal tubule and duct cell fates and the promotion of glomus and proximal tubule formation. This Xenopus tropicalis (Western clawed frog) protein is Hairy/enhancer-of-split related with YRPW motif protein 1 (hey1).